The following is a 148-amino-acid chain: MKVKIKQIYQFEGASSLPAYSTNGSAGMDLYAAIASPMIIKPHETALVPAGIAISLPYGYEAQIRSRSGLASKFGVIVLNSPGTIDSDYRGELKIIMINLGQKDFQLTPAMRIAQMVIAKYEVVSWELVDDLDETERGKNGFGSSGLK.

Substrate contacts are provided by residues R67–G69, N80, T84–D86, and K94.

Belongs to the dUTPase family. Mg(2+) is required as a cofactor.

The catalysed reaction is dUTP + H2O = dUMP + diphosphate + H(+). It functions in the pathway pyrimidine metabolism; dUMP biosynthesis; dUMP from dCTP (dUTP route): step 2/2. This enzyme is involved in nucleotide metabolism: it produces dUMP, the immediate precursor of thymidine nucleotides and it decreases the intracellular concentration of dUTP so that uracil cannot be incorporated into DNA. The protein is Deoxyuridine 5'-triphosphate nucleotidohydrolase of Orientia tsutsugamushi (strain Boryong) (Rickettsia tsutsugamushi).